A 156-amino-acid polypeptide reads, in one-letter code: Small ribosomal subunit protein uS7 (156 aa).

The protein belongs to the universal ribosomal protein uS7 family. As to quaternary structure, part of the 30S ribosomal subunit. Contacts proteins S9 and S11.

Functionally, one of the primary rRNA binding proteins, it binds directly to 16S rRNA where it nucleates assembly of the head domain of the 30S subunit. Is located at the subunit interface close to the decoding center, probably blocks exit of the E-site tRNA. The sequence is that of Small ribosomal subunit protein uS7 from Bradyrhizobium sp. (strain BTAi1 / ATCC BAA-1182).